Here is a 434-residue protein sequence, read N- to C-terminus: Nicotinate phosphoribosyltransferase (434 aa).

Histidine 242 is subject to Phosphohistidine; by autocatalysis.

This sequence belongs to the NAPRTase family. In terms of processing, transiently phosphorylated on a His residue during the reaction cycle. Phosphorylation strongly increases the affinity for substrates and increases the rate of nicotinate D-ribonucleotide production. Dephosphorylation regenerates the low-affinity form of the enzyme, leading to product release.

It carries out the reaction nicotinate + 5-phospho-alpha-D-ribose 1-diphosphate + ATP + H2O = nicotinate beta-D-ribonucleotide + ADP + phosphate + diphosphate. The protein operates within cofactor biosynthesis; NAD(+) biosynthesis; nicotinate D-ribonucleotide from nicotinate: step 1/1. Its function is as follows. Catalyzes the synthesis of beta-nicotinate D-ribonucleotide from nicotinate and 5-phospho-D-ribose 1-phosphate at the expense of ATP. This is Nicotinate phosphoribosyltransferase from Bartonella tribocorum (strain CIP 105476 / IBS 506).